Reading from the N-terminus, the 420-residue chain is Bile acid-CoA:amino acid N-acyltransferase (420 aa).

Lysine 40 is subject to N6-succinyllysine. A Phosphoserine modification is found at serine 125. Catalysis depends on charge relay system residues cysteine 235 and aspartate 328. Lysine 346 and lysine 350 each carry N6-succinyllysine. Histidine 362 serves as the catalytic Charge relay system. At lysine 409 the chain carries N6-succinyllysine. Serine 418 is modified (phosphoserine).

The protein belongs to the C/M/P thioester hydrolase family. As to quaternary structure, monomer. Highly expressed in liver, kidney, gallbladder, proximal intestine and distal intestine. Weakly expressed in adrenal gland, lung, brain and muscle.

Its subcellular location is the cytoplasm. The protein localises to the cytosol. It is found in the peroxisome. The enzyme catalyses choloyl-CoA + glycine = glycocholate + CoA + H(+). It catalyses the reaction hexadecanoyl-CoA + H2O = hexadecanoate + CoA + H(+). It carries out the reaction choloyl-CoA + H2O = cholate + CoA + H(+). The catalysed reaction is chenodeoxycholoyl-CoA + H2O = chenodeoxycholate + CoA + H(+). The enzyme catalyses eicosanoyl-CoA + H2O = eicosanoate + CoA + H(+). It catalyses the reaction octadecanoyl-CoA + H2O = octadecanoate + CoA + H(+). It carries out the reaction docosanoyl-CoA + H2O = docosanoate + CoA + H(+). The catalysed reaction is tetracosanoyl-CoA + H2O = tetracosanoate + CoA + H(+). The enzyme catalyses hexacosanoyl-CoA + H2O = hexacosanoate + CoA + H(+). It catalyses the reaction dodecanoyl-CoA + H2O = dodecanoate + CoA + H(+). It carries out the reaction tetradecanoyl-CoA + H2O = tetradecanoate + CoA + H(+). The catalysed reaction is choloyl-CoA + taurine = taurocholate + CoA + H(+). The enzyme catalyses chenodeoxycholoyl-CoA + glycine = glycochenodeoxycholate + CoA + H(+). It catalyses the reaction chenodeoxycholoyl-CoA + taurine = taurochenodeoxycholate + CoA + H(+). It carries out the reaction eicosanoyl-CoA + glycine = N-eicosanoylglycinate + CoA + H(+). The catalysed reaction is hexacosanoyl-CoA + glycine = N-hexacosanoylglycine + CoA + H(+). The enzyme catalyses docosanoyl-CoA + glycine = N-docosanoylglycine + CoA + H(+). Its function is as follows. Catalyzes the amidation of bile acids (BAs) with the amino acid taurine. Selective for taurine conjugation of cholyl CoA and only taurine-conjugated BAs are found in bile. Amidation of BAs in the liver with taurine prior to their excretion into bile is an important biochemical event in bile acid metabolism. This conjugation (or amidation) plays several important biological roles in that it promotes the secretion of BAs and cholesterol into bile and increases the detergent properties of BAs in the intestine, which facilitates lipid and vitamin absorption. May also act as an acyl-CoA thioesterase that regulates intracellular levels of free fatty acids. In vitro, catalyzes the hydrolysis of long- and very long-chain saturated acyl-CoAs to the free fatty acid and coenzyme A (CoASH), and conjugates glycine to these acyl-CoAs. The chain is Bile acid-CoA:amino acid N-acyltransferase (Baat) from Mus musculus (Mouse).